The chain runs to 335 residues: Meiotic expression up-regulated protein 14 (335 aa).

The protein resides in the cytoplasm. It is found in the cytoskeleton. The protein localises to the microtubule organizing center. Its subcellular location is the spindle pole body. It localises to the nucleus membrane. The protein resides in the prospore membrane. Functionally, has a role in nuclear division during meiosis II where it stabilizes the proper segregation of the spindle pole bodies. Also has a role in the formation and extension of the forespore membrane. The protein is Meiotic expression up-regulated protein 14 (meu14) of Schizosaccharomyces pombe (strain 972 / ATCC 24843) (Fission yeast).